The following is a 148-amino-acid chain: UPF0260 protein Sfri_1740 (148 aa).

This sequence belongs to the UPF0260 family.

The polypeptide is UPF0260 protein Sfri_1740 (Shewanella frigidimarina (strain NCIMB 400)).